We begin with the raw amino-acid sequence, 977 residues long: GAS2-like protein pickled eggs (977 aa).

A Calponin-homology (CH) domain is found at 20–159 (EAMREDLAEW…CLLEVARRGA (140 aa)). The disordered stretch occupies residues 218-245 (VETDLYDDSDDSETEDDGDQNPVLMYGP). Acidic residues predominate over residues 221 to 236 (DLYDDSDDSETEDDGD). Residues 252–324 (NDLKSLDEMV…HYLDKHDPCR (73 aa)) enclose the GAR domain. Disordered regions lie at residues 397–543 (PTLQ…SEIS), 557–624 (AQKR…VCDG), 666–685 (VANT…RSPL), 693–803 (IDNS…KGRS), and 910–977 (NLER…TELY). Polar residues-rich tracts occupy residues 399-428 (LQNG…NQQA) and 436-454 (ATGS…QLLG). Residues 502 to 527 (GGSGVGSAAGGVSSGSAGSGVAGEQG) show a composition bias toward gly residues. Polar residues predominate over residues 577 to 589 (RLDQTSSDSQISP). A compositionally biased stretch (acidic residues) spans 601-620 (ILEEEDLNGQDREEDQEDYS). 2 stretches are compositionally biased toward polar residues: residues 666-677 (VANTMGNPTPNL) and 731-741 (TRNSTGATTTP). The segment covering 928–953 (SSAASSCESNNSNAGAGSGAAAGSAS) has biased composition (low complexity).

Belongs to the GAS2 family. As to expression, expressed in the ovary and the ring canals of the germline cells. In larvae, expressed in the notal region of the wing disk.

It is found in the cytoplasm. Its subcellular location is the cytoskeleton. The protein resides in the cell cortex. Essential for development and viability. Required for ovary development and oogenesis, and is essential for the development of the indirect flight muscles. May act as a negative regulator of the Notch signaling pathway in certain tissues, such as the muscle precursors and ovaries. May function as a linker protein between the actin and microtubule cytoskeletons. This Drosophila melanogaster (Fruit fly) protein is GAS2-like protein pickled eggs.